The chain runs to 117 residues: Non-specific lipid-transfer protein Lac s 1 (117 aa).

Residues 1 to 25 (MARMAMMILCVVLTCMVVATPYTEA) form the signal peptide. Cystine bridges form between Cys29–Cys76, Cys39–Cys53, Cys54–Cys99, and Cys74–Cys113.

It belongs to the plant LTP family.

Its function is as follows. Plant non-specific lipid-transfer proteins transfer phospholipids as well as galactolipids across membranes. May play a role in wax or cutin deposition in the cell walls of expanding epidermal cells and certain secretory tissues. The chain is Non-specific lipid-transfer protein Lac s 1 from Lactuca sativa (Garden lettuce).